The chain runs to 657 residues: Replication restart protein PriA (657 aa).

One can recognise a Helicase ATP-binding domain in the interval 143–309 (ITASTGARSF…LRGAVRRLPL (167 aa)). 156–163 (GVTGSGKT) is an ATP binding site. The short motif at 252 to 255 (DEEH) is the DEAH box element. The Zn(2+) site is built by Cys-366, Cys-369, Cys-375, Cys-378, Cys-393, Cys-396, Cys-406, and Cys-409. A Helicase C-terminal domain is found at 390-570 (AMQCHYCGRQ…PFVRLIRFVF (181 aa)).

It belongs to the helicase family. PriA subfamily. As to quaternary structure, component of the replication restart primosome. It depends on Zn(2+) as a cofactor.

The catalysed reaction is Couples ATP hydrolysis with the unwinding of duplex DNA by translocating in the 3'-5' direction.. It catalyses the reaction ATP + H2O = ADP + phosphate + H(+). In terms of biological role, initiates the restart of stalled replication forks, which reloads the replicative helicase on sites other than the origin of replication. Recognizes and binds to abandoned replication forks and remodels them to uncover a helicase loading site. Promotes assembly of the primosome at these replication forks. The sequence is that of Replication restart protein PriA from Treponema pallidum (strain Nichols).